We begin with the raw amino-acid sequence, 408 residues long: Argininosuccinate synthase (408 aa).

ATP-binding positions include 14 to 22 and Ala41; that span reads AYSGGLDTS. L-citrulline is bound by residues Tyr92 and Ser97. ATP is bound at residue Gly122. L-aspartate contacts are provided by Thr124, Asn128, and Asp129. Asn128 provides a ligand contact to L-citrulline. Arg132, Ser181, Ser190, Glu266, and Tyr278 together coordinate L-citrulline.

This sequence belongs to the argininosuccinate synthase family. Type 1 subfamily. In terms of assembly, homotetramer.

The protein resides in the cytoplasm. The enzyme catalyses L-citrulline + L-aspartate + ATP = 2-(N(omega)-L-arginino)succinate + AMP + diphosphate + H(+). The protein operates within amino-acid biosynthesis; L-arginine biosynthesis; L-arginine from L-ornithine and carbamoyl phosphate: step 2/3. The protein is Argininosuccinate synthase of Pelobacter propionicus (strain DSM 2379 / NBRC 103807 / OttBd1).